We begin with the raw amino-acid sequence, 393 residues long: Small RNA 2'-O-methyltransferase (393 aa).

The S-adenosyl-L-methionine site is built by S60, D78, and S114. Mg(2+) is bound by residues E132, E135, H136, and H181. Positions 283–309 are disordered; sequence RVSHLPRRKEQDGEQGDKPKDIGGSKA. Positions 290–305 are enriched in basic and acidic residues; sequence RKEQDGEQGDKPKDIG.

This sequence belongs to the methyltransferase superfamily. HEN1 family. The cofactor is Mg(2+).

It is found in the cytoplasm. It catalyses the reaction small RNA 3'-end nucleotide + S-adenosyl-L-methionine = small RNA 3'-end 2'-O-methylnucleotide + S-adenosyl-L-homocysteine + H(+). Functionally, methyltransferase that adds a 2'-O-methyl group at the 3'-end of piRNAs, a class of 24 to 30 nucleotide RNAs that are generated by a Dicer-independent mechanism and are primarily derived from transposons and other repeated sequence elements. This probably protects the 3'-end of piRNAs from uridylation activity and subsequent degradation. Stabilization of piRNAs is essential for gametogenesis. The polypeptide is Small RNA 2'-O-methyltransferase (HENMT1) (Macaca fascicularis (Crab-eating macaque)).